The chain runs to 492 residues: N-succinylglutamate 5-semialdehyde dehydrogenase (492 aa).

Residue 220-225 participates in NAD(+) binding; sequence GSANTG. Residues glutamate 243 and cysteine 277 contribute to the active site.

This sequence belongs to the aldehyde dehydrogenase family. AstD subfamily.

It carries out the reaction N-succinyl-L-glutamate 5-semialdehyde + NAD(+) + H2O = N-succinyl-L-glutamate + NADH + 2 H(+). It participates in amino-acid degradation; L-arginine degradation via AST pathway; L-glutamate and succinate from L-arginine: step 4/5. In terms of biological role, catalyzes the NAD-dependent reduction of succinylglutamate semialdehyde into succinylglutamate. In Escherichia coli (strain 55989 / EAEC), this protein is N-succinylglutamate 5-semialdehyde dehydrogenase.